The sequence spans 185 residues: Prorelaxin H1 (185 aa).

The first 22 residues, 1 to 22 (MPRLFLFHLLEFCLLLNQFSRA), serve as a signal peptide directing secretion. 3 cysteine pairs are disulfide-bonded: C35–C172, C47–C185, and C171–C176. Residues 56 to 158 (SLSQEDAPQT…KYLGLDTHSQ (103 aa)) constitute a propeptide, connecting peptide.

The protein belongs to the insulin family. Heterodimer of a B chain and an A chain linked by two disulfide bonds. In terms of tissue distribution, prostate. Not expressed in placenta, decidua or ovary.

It is found in the secreted. Functionally, relaxin is an ovarian hormone that acts with estrogen to produce dilatation of the birth canal in many mammals. May be involved in remodeling of connective tissues during pregnancy, promoting growth of pubic ligaments and ripening of the cervix. In Homo sapiens (Human), this protein is Prorelaxin H1 (RLN1).